The primary structure comprises 111 residues: Dormancy-associated protein 1 (111 aa).

A disordered region spans residues Lys30–Ala60. Over residues Ser41–Ser59 the composition is skewed to low complexity.

The protein belongs to the DRM1/ARP family. Expressed in axilary buds and in non-growing stems and roots. Detected in sepals, stamens and carpels, but barely detected in petals or leaflets.

This chain is Dormancy-associated protein 1, found in Pisum sativum (Garden pea).